Reading from the N-terminus, the 615-residue chain is Threonine--tRNA ligase (615 aa).

The editing domain stretch occupies residues 1–132 (MRILQLHCDR…PLAEGFKVIT (132 aa)). The interval 196–495 (PHVALMKRMG…SARGTKPELP (300 aa)) is catalytic. The Zn(2+) site is built by Cys288, His340, and His464.

The protein belongs to the class-II aminoacyl-tRNA synthetase family. Homodimer. Zn(2+) is required as a cofactor.

Its subcellular location is the cytoplasm. It catalyses the reaction tRNA(Thr) + L-threonine + ATP = L-threonyl-tRNA(Thr) + AMP + diphosphate + H(+). Catalyzes the attachment of threonine to tRNA(Thr) in a two-step reaction: L-threonine is first activated by ATP to form Thr-AMP and then transferred to the acceptor end of tRNA(Thr). Also edits incorrectly charged L-seryl-tRNA(Thr). This is Threonine--tRNA ligase (thrS) from Cenarchaeum symbiosum (strain A).